We begin with the raw amino-acid sequence, 104 residues long: Class I hydrophobin 12 (104 aa).

Positions 1–25 are cleaved as a signal peptide; sequence MFSKATLFFTAAVVIVAAGATPTTS. Disulfide bonds link cysteine 27–cysteine 85, cysteine 34–cysteine 79, cysteine 35–cysteine 67, and cysteine 86–cysteine 99.

Belongs to the fungal hydrophobin family. As to quaternary structure, self-assembles to form functional amyloid fibrils called rodlets. Self-assembly into fibrillar rodlets occurs spontaneously at hydrophobic:hydrophilic interfaces and the rodlets further associate laterally to form amphipathic monolayers.

It localises to the secreted. Its subcellular location is the cell wall. Aerial growth, conidiation, and dispersal of filamentous fungi in the environment rely upon a capability of their secreting small amphipathic proteins called hydrophobins (HPBs) with low sequence identity. Class I can self-assemble into an outermost layer of rodlet bundles on aerial cell surfaces, conferring cellular hydrophobicity that supports fungal growth, development and dispersal; whereas Class II form highly ordered films at water-air interfaces through intermolecular interactions but contribute nothing to the rodlet structure. Hydph12 is a class I hydrophobin involved in the formation of mycelium knots. The protein is Class I hydrophobin 12 of Pleurotus ostreatus (strain PC15) (Oyster mushroom).